A 1500-amino-acid chain; its full sequence is MTRILTACKVVKTLKSGFGFANVTTKRQWDFSRPGIRLLSVKAKTAHIVLEDGTKMKGYSFGHPSSVAGEVVFNTGLGGYPEALTDPAYKGQILTMANPIIGNGGAPDTTARDELGLNKYMESDGIKVAGLLVLNYSNDYNHWLATKSLGQWLQEEKVPAIYGVDTRMLTKIIRDKGTMLGKIEFEGQSVDFVDPNKQNLIAEVSTKDVKVFGKGNPTKVVAVDCGIKNNVIRLLVKRGAEVHLVPWNHDFTQMEYDGLLIAGGPGNPALAQPLIQNVKKILESDRKEPLFGISTGNIITGLAAGAKSYKMSMANRGQNQPVLNITNRQAFITAQNHGYALDNTLPAGWKPLFVNVNDQTNEGIMHESKPFFAVQFHPEVSPGPTDTEYLFDSFFSLIKKGKGTTITSVLPKPALVASRVEVSKVLILGSGGLSIGQAGEFDYSGSQAVKAMKEENVKTVLMNPNIASVQTNEVGLKQADAVYFLPITPQFVTEVIKAERPDGLILGMGGQTALNCGVELFKRGVLKEYGVKVLGTSVESIMATEDRQLFSDKLNEINEKIAPSFAVESMEDALKAADTIGYPVMIRSAYALGGLGSGICPNKETLIDLGTKAFAMTNQILVERSVTGWKEIEYEVVRDADDNCVTVCNMENVDAMGVHTGDSVVVAPAQTLSNAEFQMLRRTSVNVVRHLGIVGECNIQFALHPTSMEYCIIEVNARLSRSSALASKATGYPLAFIAAKIALGIPLPEIKNVVSGKTSACFEPSLDYMVTKIPRWDLDRFHGTSSRIGSSMKSVGEVMAIGRTFEESFQKALRMCHPSVDGFTPRLPMNKEWPANLDLKKELSEPSSTRIYAIAKALENNMSLDEIVRLTSIDKWFLYKMRDILNMDKTLKGLNSDSVTEETLRKAKEIGFSDKQISKCLGLTEAQTRELRLKKNIHPWVKQIDTLAAEYPSVTNYLYVTYNGQEHDIKFDEHGIMVLGCGPYHIGSSVEFDWCAVSSIRTLRQLGKKTVVVNCNPETVSTDFDECDKLYFEELSLERILDIYHQEACNGCIISVGGQIPNNLAVPLYKNGVKIMGTSPLQIDRAEDRSIFSAVLDELKVAQAPWKAVNTLNEALEFANSVGYPCLLRPSYVLSGSAMNVVFSEDEMKRFLEEATRVSQEHPVVLTKFVEGAREVEMDAVGKEGRVISHAISEHVEDAGVHSGDATLMLPTQTISQGAIEKVKDATRKIAKAFAISGPFNVQFLVKGNDVLVIECNLRASRSFPFVSKTLGVDFIDVATKVMIGESIDEKRLPTLEQPIIPSDYVAIKAPMFSWPRLRDADPILRCEMASTGEVACFGEGIHTAFLKAMLSTGFKIPQKGILIGIQQSFRPRFLGVAEQLHNEGFKLFATEATSDWLNANNVPATPVAWPSQEGQNPSLSSIRKLIRDGSIDLVINLPNNNTKFVHDNYVIRRTAVDSGIALLTNFQVTKLFAEAVQKSRTVDSKSLFHYRQYSAGKAA.

Residues 1–38 (MTRILTACKVVKTLKSGFGFANVTTKRQWDFSRPGIRL) constitute a mitochondrion transit peptide. Positions 39 to 218 (LSVKAKTAHI…VKVFGKGNPT (180 aa)) are anthranilate phosphoribosyltransferase homolog. N6-acetyllysine; alternate is present on residues K44, K55, K57, and K119. N6-succinyllysine; alternate occurs at positions 44, 55, 57, and 119. K55 is modified (N6-glutaryllysine; alternate). S148 carries the post-translational modification Phosphoserine. Residues K157 and K171 each carry the N6-acetyllysine; alternate modification. K157 bears the N6-succinyllysine; alternate mark. K171 carries the N6-glutaryllysine; alternate modification. K176 carries the post-translational modification N6-glutaryllysine. Residue K182 is modified to N6-acetyllysine. S189 is modified (phosphoserine). K197 bears the N6-acetyllysine mark. K207, K210, K214, K219, and K228 each carry N6-acetyllysine; alternate. The residue at position 207 (K207) is an N6-succinyllysine; alternate. K207, K210, K214, K219, and K228 each carry N6-glutaryllysine; alternate. K214 carries the post-translational modification N6-succinyllysine; alternate. Residues 219 to 404 (KVVAVDCGIK…FSLIKKGKGT (186 aa)) enclose the Glutamine amidotransferase type-1 domain. An N6-glutaryllysine modification is found at K237. Residue K279 is modified to N6-acetyllysine. N6-acetyllysine; alternate occurs at positions 280, 287, 307, and 310. Residue K280 is modified to N6-glutaryllysine; alternate. N6-succinyllysine; alternate occurs at positions 287 and 307. K307 and K310 each carry N6-glutaryllysine; alternate. The residue at position 400 (K400) is an N6-succinyllysine. N6-succinyllysine; alternate occurs at positions 402 and 412. 4 positions are modified to N6-glutaryllysine; alternate: K402, K412, K453, and K458. K412, K453, K458, K522, K527, and K532 each carry N6-acetyllysine; alternate. An N6-succinyllysine; alternate mark is found at K458, K522, and K527. N6-glutaryllysine; alternate occurs at positions 527 and 532. S537 carries the phosphoserine; alternate modification. S537 carries an O-linked (GlcNAc) serine; alternate glycan. S540 is modified (phosphoserine). Positions 551-743 (SDKLNEINEK…LAFIAAKIAL (193 aa)) constitute an ATP-grasp 1 domain. An N6-acetyllysine; alternate mark is found at K553 and K560. N6-succinyllysine; alternate occurs at positions 553 and 560. K553 carries the N6-glutaryllysine; alternate modification. Position 569 is a phosphoserine (S569). An N6-acetyllysine; alternate mark is found at K575, K603, and K612. An N6-succinyllysine; alternate mark is found at K575, K603, and K612. Position 630 is an N6-acetyllysine (K630). Residue K728 is modified to N6-glutaryllysine. K751, K757, K772, K793, K811, K831, K840, K841, K856, K875, K889, and K892 each carry N6-acetyllysine; alternate. K751 and K757 each carry N6-succinyllysine; alternate. 4 positions are modified to N6-glutaryllysine; alternate: K757, K772, K793, and K811. The residue at position 793 (K793) is an N6-succinyllysine; alternate. 2 positions are modified to N6-succinyllysine; alternate: K831 and K840. 5 positions are modified to N6-glutaryllysine; alternate: K841, K856, K875, K889, and K892. Residues K875, K889, and K892 each carry the N6-succinyllysine; alternate modification. Residues S896 and S898 each carry the phosphoserine modification. K908, K915, and K919 each carry N6-acetyllysine; alternate. K908, K915, and K919 each carry N6-glutaryllysine; alternate. Residues K915 and K919 each carry the N6-succinyllysine; alternate modification. At K935 the chain carries N6-acetyllysine. S1036 carries the post-translational modification Phosphoserine. Position 1074 is an N6-acetyllysine; alternate (K1074). Position 1074 is an N6-succinyllysine; alternate (K1074). K1074 carries the N6-glutaryllysine; alternate modification. Phosphoserine is present on residues S1079, S1090, and S1093. Residues 1093–1284 (SAVLDELKVA…FIDVATKVMI (192 aa)) enclose the ATP-grasp 2 domain. An N6-acetyllysine; alternate modification is found at K1100. K1100 is modified (N6-succinyllysine; alternate). N6-succinyllysine is present on K1149. 2 positions are modified to N6-acetyllysine; alternate: K1168 and K1183. 2 positions are modified to N6-succinyllysine; alternate: K1168 and K1183. Residues K1168 and K1183 each carry the N6-glutaryllysine; alternate modification. Residue S1203 is modified to Phosphoserine. K1222 carries the N6-acetyllysine modification. K1224 carries the N6-glutaryllysine modification. An N6-acetyllysine; alternate mark is found at K1232, K1269, and K1291. K1232, K1269, and K1291 each carry N6-succinyllysine; alternate. O-linked (GlcNAc) serine glycosylation is present at S1331. T1332 is a glycosylation site (O-linked (GlcNAc) threonine). The MGS-like domain occupies 1355-1500 (FKIPQKGILI…YRQYSAGKAA (146 aa)). At K1356 the chain carries N6-acetyllysine; alternate. Residues K1356 and K1360 each carry the N6-succinyllysine; alternate modification. N6-glutaryllysine; alternate occurs at positions 1356 and 1360. The N-acetyl-L-glutamate site is built by T1391, T1394, and W1410. Phosphoserine is present on residues S1419 and S1431. N-acetyl-L-glutamate is bound by residues N1437 and N1440. At K1444 the chain carries N6-acetyllysine; alternate. Position 1444 is an N6-succinyllysine; alternate (K1444). N1449 lines the N-acetyl-L-glutamate pocket. An N6-acetyllysine; alternate mark is found at K1471, K1479, and K1486. Residues K1471, K1479, and K1486 each carry the N6-succinyllysine; alternate modification. K1479 and K1486 each carry N6-glutaryllysine; alternate.

As to quaternary structure, can form homooligomers (monomers as predominant form and dimers). In terms of assembly, (Microbial infection) Interacts with P.berghei (ANKA strain) phospholipid scramblase PLSCR; the interaction is involved in the interaction between parasite sporozoites and host hepatocytes. Undergoes proteolytic cleavage in the C-terminal region corresponding to the loss of approximately 12 AA residues from the C-terminus. In terms of processing, acetylation of Lys-287, Lys-603, Lys-841 and Lys-1291 is observed in liver mitochondria from fasted mice but not from fed mice. Post-translationally, succinylated at Lys-44, Lys-287 and Lys-1291. Desuccinylated at Lys-1291 by SIRT5, leading to activation. Glutarylated. Glutarylation levels increase during fasting. Deglutarylated by SIRT5 at Lys-55, Lys-219, Lys-412, Lys-889, Lys-892, Lys-915, Lys-1360 and Lys-1486, leading to activation. As to expression, expressed in hepatocytes (at protein level).

It localises to the mitochondrion. It is found in the nucleus. Its subcellular location is the nucleolus. The protein localises to the cell membrane. The catalysed reaction is hydrogencarbonate + NH4(+) + 2 ATP = carbamoyl phosphate + 2 ADP + phosphate + 2 H(+). Requires N-acetyl-L-glutamate (NAG) as an allosteric activator. In terms of biological role, involved in the urea cycle of ureotelic animals where the enzyme plays an important role in removing excess ammonia from the cell. The protein is Carbamoyl-phosphate synthase [ammonia], mitochondrial (Cps1) of Mus musculus (Mouse).